Consider the following 395-residue polypeptide: Altered inheritance of mitochondria protein 39, mitochondrial (395 aa).

A helical membrane pass occupies residues 156 to 176 (QIWSAIFGGIFGVILGYSLIY).

This sequence belongs to the AIM39 family.

The protein resides in the mitochondrion membrane. This Saccharomyces cerevisiae (strain ATCC 204508 / S288c) (Baker's yeast) protein is Altered inheritance of mitochondria protein 39, mitochondrial (AIM39).